The chain runs to 96 residues: Small ribosomal subunit protein bS6 (96 aa).

This sequence belongs to the bacterial ribosomal protein bS6 family.

Its function is as follows. Binds together with bS18 to 16S ribosomal RNA. This Streptococcus sanguinis (strain SK36) protein is Small ribosomal subunit protein bS6.